Reading from the N-terminus, the 264-residue chain is Thymidylate synthase (264 aa).

DUMP is bound at residue R21. Residue H51 participates in (6R)-5,10-methylene-5,6,7,8-tetrahydrofolate binding. 126 to 127 provides a ligand contact to dUMP; the sequence is RR. C146 acts as the Nucleophile in catalysis. DUMP-binding positions include 166–169, N177, and 207–209; these read RSAD and HLY. D169 is a binding site for (6R)-5,10-methylene-5,6,7,8-tetrahydrofolate. Residue A263 participates in (6R)-5,10-methylene-5,6,7,8-tetrahydrofolate binding.

It belongs to the thymidylate synthase family. Bacterial-type ThyA subfamily. Homodimer.

The protein resides in the cytoplasm. It carries out the reaction dUMP + (6R)-5,10-methylene-5,6,7,8-tetrahydrofolate = 7,8-dihydrofolate + dTMP. Its pathway is pyrimidine metabolism; dTTP biosynthesis. Functionally, catalyzes the reductive methylation of 2'-deoxyuridine-5'-monophosphate (dUMP) to 2'-deoxythymidine-5'-monophosphate (dTMP) while utilizing 5,10-methylenetetrahydrofolate (mTHF) as the methyl donor and reductant in the reaction, yielding dihydrofolate (DHF) as a by-product. This enzymatic reaction provides an intracellular de novo source of dTMP, an essential precursor for DNA biosynthesis. This Mesorhizobium japonicum (strain LMG 29417 / CECT 9101 / MAFF 303099) (Mesorhizobium loti (strain MAFF 303099)) protein is Thymidylate synthase.